We begin with the raw amino-acid sequence, 44 residues long: F420-non-reducing hydrogenase vhu subunit U (44 aa).

2 residues coordinate Ni(2+): selenocysteine 20 and cysteine 23. Position 20 (selenocysteine 20) is a non-standard amino acid, selenocysteine. Positions 27–44 are cleaved as a propeptide — removed in mature form; it reads MIVEDAEGNVVFEIVNDE.

This sequence belongs to the [NiFe]/[NiFeSe] hydrogenase large subunit family. In terms of assembly, the F420-non-reducing hydrogenase vhu is composed of four subunits; VhuA, VhuD, VhuG and VhuU. Ni(2+) serves as cofactor.

The protein is F420-non-reducing hydrogenase vhu subunit U (vhuU) of Methanococcus voltae.